An 858-amino-acid polypeptide reads, in one-letter code: Leucine--tRNA ligase (858 aa).

A 'HIGH' region motif is present at residues 42 to 52 (PYPSGRLHMGH). The 'KMSKS' region motif lies at 618-622 (KMSKS). K621 lines the ATP pocket.

This sequence belongs to the class-I aminoacyl-tRNA synthetase family.

The protein localises to the cytoplasm. It catalyses the reaction tRNA(Leu) + L-leucine + ATP = L-leucyl-tRNA(Leu) + AMP + diphosphate. In Aeromonas salmonicida (strain A449), this protein is Leucine--tRNA ligase.